A 346-amino-acid chain; its full sequence is DnaJ protein ERDJ3B (346 aa).

The first 23 residues, 1–23 (MAIRWSELCIVLFALSYAICVLA), serve as a signal peptide directing secretion. The J domain maps to 26–91 (SYYDVLQVPK…EKREIYNKYG (66 aa)). An N-linked (GlcNAc...) asparagine glycan is attached at Asn267.

Interacts with SDF2 and MED37A/BIP1. Post-translationally, N-glycosylated. In terms of tissue distribution, expressed in leaves, flower buds and flowers.

It is found in the endoplasmic reticulum lumen. Its function is as follows. Regulates protein folding in the endoplasmic reticulum (ER) lumen. Forms a complex in the ER with SDF2 and MED37A/BIP1 which is required for the proper accumulation and function of the surface-exposed leucine-rich repeat receptor kinases EFR involved in pathogen-associated molecular pattern (PAMP) triggered immunity. This chain is DnaJ protein ERDJ3B (ERDJ3B), found in Arabidopsis thaliana (Mouse-ear cress).